Consider the following 212-residue polypeptide: ER lumen protein-retaining receptor 2 (212 aa).

The Lumenal segment spans residues 1–4; it reads MNIF. The helical transmembrane segment at 5–24 threads the bilayer; the sequence is RLTGDLSHLAAIVILLLKIW. Residues 25–32 are Cytoplasmic-facing; it reads KTRSCAGI. The helical transmembrane segment at 33–52 threads the bilayer; the sequence is SGKSQLLFALVFTTRYLDLF. The tract at residues 47 to 48 is interaction with the K-D-E-L motif on target proteins; the sequence is RY. The Lumenal segment spans residues 53-58; it reads TSFISL. A helical transmembrane segment spans residues 59 to 79; it reads YNTSMKLIYIACSYATVYLIY. The Cytoplasmic portion of the chain corresponds to 80 to 92; the sequence is MKFKATYDGNHDT. Residues 93–110 form a helical membrane-spanning segment; that stretch reads FRVEFLVVPVGGLSFLVN. The Lumenal portion of the chain corresponds to 111 to 116; the sequence is HDFSPL. Residues 117–135 form a helical membrane-spanning segment; it reads EILWTFSIYLESVAILPQL. Residues 136–149 are Cytoplasmic-facing; the sequence is FMISKTGEAETITT. Residues 150–168 traverse the membrane as a helical segment; it reads HYLFFLGLYRALYLVNWIW. The interval 159 to 169 is interaction with the K-D-E-L motif on target proteins; sequence RALYLVNWIWR. Residues 169–178 are Lumenal-facing; that stretch reads RFYFEGFFDL. Residues 179–199 traverse the membrane as a helical segment; it reads IAVVAGVVQTILYCDFFYLYI. Residues 200-212 are Cytoplasmic-facing; the sequence is TKVLKGKKLSLPA. Residues 204–207 are important for recycling of cargo proteins with the sequence motif K-D-E-L from the Golgi to the endoplasmic reticulum; sequence KGKK.

Belongs to the ERD2 family.

It localises to the endoplasmic reticulum membrane. The protein localises to the golgi apparatus membrane. The protein resides in the cytoplasmic vesicle. Its subcellular location is the COPI-coated vesicle membrane. Functionally, membrane receptor that binds the K-D-E-L sequence motif in the C-terminal part of endoplasmic reticulum resident proteins and maintains their localization in that compartment by participating to their vesicle-mediated recycling back from the Golgi. Binding is pH dependent, and is optimal at pH 5-5.4. This is ER lumen protein-retaining receptor 2 (Kdelr2) from Mus musculus (Mouse).